Consider the following 358-residue polypeptide: Putative spore germination protein YfkT (358 aa).

The next 10 membrane-spanning stretches (helical) occupy residues 10–30 (LFFG…ILMI), 36–56 (NAWH…WLMH), 81–101 (IIIL…IRFF), 107–127 (ILFL…FVAI), 143–163 (IFLF…ATQI), 179–199 (LQSG…PLLF), 210–230 (IFAI…SISV), 262–282 (IIAA…LYIV), 297–317 (AMYT…FLNT), and 326–346 (IKPI…YLII).

The protein belongs to the amino acid-polyamine-organocation (APC) superfamily. Spore germination protein (SGP) (TC 2.A.3.9) family.

It is found in the cell membrane. Functionally, may be involved in spore germination. The protein is Putative spore germination protein YfkT (yfkT) of Bacillus subtilis (strain 168).